We begin with the raw amino-acid sequence, 154 residues long: 6,7-dimethyl-8-ribityllumazine synthase (154 aa).

5-amino-6-(D-ribitylamino)uracil contacts are provided by residues Phe23, 57-59 (AFE), and 81-83 (AVI). 86 to 87 (AT) is a (2S)-2-hydroxy-3-oxobutyl phosphate binding site. The Proton donor role is filled by His89. Phe114 serves as a coordination point for 5-amino-6-(D-ribitylamino)uracil. A (2S)-2-hydroxy-3-oxobutyl phosphate-binding site is contributed by Arg128.

Belongs to the DMRL synthase family.

The catalysed reaction is (2S)-2-hydroxy-3-oxobutyl phosphate + 5-amino-6-(D-ribitylamino)uracil = 6,7-dimethyl-8-(1-D-ribityl)lumazine + phosphate + 2 H2O + H(+). It participates in cofactor biosynthesis; riboflavin biosynthesis; riboflavin from 2-hydroxy-3-oxobutyl phosphate and 5-amino-6-(D-ribitylamino)uracil: step 1/2. Its function is as follows. Catalyzes the formation of 6,7-dimethyl-8-ribityllumazine by condensation of 5-amino-6-(D-ribitylamino)uracil with 3,4-dihydroxy-2-butanone 4-phosphate. This is the penultimate step in the biosynthesis of riboflavin. The chain is 6,7-dimethyl-8-ribityllumazine synthase from Syntrophus aciditrophicus (strain SB).